The sequence spans 340 residues: Glutaminyl-peptide cyclotransferase (340 aa).

An N-terminal signal peptide occupies residues M1–Q23. Residue N42 is glycosylated (N-linked (GlcNAc...) asparagine). Alpha-D-mannopyranose contacts are provided by R85 and E91. Residues C113 and C136 are joined by a disulfide bond. A Zn(2+)-binding site is contributed by D131. Positions 151 and 155 each coordinate alpha-D-mannopyranose. N156 carries N-linked (GlcNAc...) asparagine glycosylation. E170 (proton acceptor) is an active-site residue. E171 contributes to the Zn(2+) binding site. The active-site Proton acceptor is the D218. Residue H297 participates in Zn(2+) binding. Position 306 (L306) interacts with alpha-D-mannopyranose.

This sequence belongs to the glutaminyl-peptide cyclotransferase family.

Its subcellular location is the secreted. It carries out the reaction N-terminal L-glutaminyl-[peptide] = N-terminal 5-oxo-L-prolyl-[peptide] + NH4(+). Inhibited by imidazoles (imidazole, benzimidazole, 1-benzylimidazole, 1-methylimidazole, P150/03, N-omega-acetylhistamine and 4-methylimidazole) and cysteamines (cysteamine, N-dimethylcysteamine and N-diethylcysteamine). Partially inhibited by PDB50 1(3,4-dimethoxyphenyl)-3-(3-imidazol-1-ylpropyl)thiourea. In terms of biological role, acts as a glutaminyl-peptide cyclotransferase. Responsible for the biosynthesis of pyroglutamyl peptides. Might be more efficient in the conversion of tri and tetrapeptides in vitro. Might have a relative preference for substrates containing hydrophobic amino acids in vitro. This is Glutaminyl-peptide cyclotransferase from Drosophila melanogaster (Fruit fly).